Reading from the N-terminus, the 188-residue chain is dCTP deaminase (188 aa).

DCTP is bound by residues 111-116 (KSTYAR), 135-137 (TLE), Q156, Y170, and Q180. Catalysis depends on E137, which acts as the Proton donor/acceptor.

This sequence belongs to the dCTP deaminase family. In terms of assembly, homotrimer.

It catalyses the reaction dCTP + H2O + H(+) = dUTP + NH4(+). Its pathway is pyrimidine metabolism; dUMP biosynthesis; dUMP from dCTP (dUTP route): step 1/2. In terms of biological role, catalyzes the deamination of dCTP to dUTP. This Pseudomonas fluorescens (strain Pf0-1) protein is dCTP deaminase.